Here is a 137-residue protein sequence, read N- to C-terminus: Large ribosomal subunit protein uL16 (137 aa).

It belongs to the universal ribosomal protein uL16 family. Part of the 50S ribosomal subunit.

Its function is as follows. Binds 23S rRNA and is also seen to make contacts with the A and possibly P site tRNAs. The polypeptide is Large ribosomal subunit protein uL16 (Psychrobacter arcticus (strain DSM 17307 / VKM B-2377 / 273-4)).